The sequence spans 794 residues: cAMP and cAMP-inhibited cGMP 3',5'-cyclic phosphodiesterase 10A (794 aa).

Residues Arg-296 to Cys-297, Ile-340 to Ala-341, Thr-374, Gln-393, and His-525 each bind 3',5'-cyclic AMP. The PDEase domain occupies Thr-452–Glu-769. His-525 acts as the Proton donor in catalysis. His-525 contributes to the 3',5'-cyclic GMP binding site. Residues His-529, His-563, Asp-564, and Asp-674 each contribute to the a divalent metal cation site. Gln-726 is a 3',5'-cyclic AMP binding site. Gln-726 is a binding site for 3',5'-cyclic GMP.

It belongs to the cyclic nucleotide phosphodiesterase family. In terms of assembly, homodimer. A divalent metal cation serves as cofactor. As to expression, detected in striatum and testis (at protein level). Detected in whole brain, hippocampus, olfactory bulb, striatum neurons and testis.

The protein localises to the cytoplasm. It localises to the cytosol. The catalysed reaction is a nucleoside 3',5'-cyclic phosphate + H2O = a nucleoside 5'-phosphate + H(+). It carries out the reaction 3',5'-cyclic AMP + H2O = AMP + H(+). It catalyses the reaction 3',5'-cyclic GMP + H2O = GMP + H(+). Its pathway is purine metabolism; 3',5'-cyclic AMP degradation; AMP from 3',5'-cyclic AMP: step 1/1. It participates in purine metabolism; 3',5'-cyclic GMP degradation; GMP from 3',5'-cyclic GMP: step 1/1. Inhibited by dipyridamole and moderately by IBMX, zaprinast and rolipram. Plays a role in signal transduction by regulating the intracellular concentration of cyclic nucleotides. Can hydrolyze both cAMP and cGMP, but has higher affinity for cAMP and is more efficient with cAMP as substrate. The chain is cAMP and cAMP-inhibited cGMP 3',5'-cyclic phosphodiesterase 10A (Pde10a) from Rattus norvegicus (Rat).